Reading from the N-terminus, the 902-residue chain is 4-hydroxyphenylacetate decarboxylase glycyl radical subunit (902 aa).

In terms of domain architecture, PFL spans 38-774 (KRAEDLLDVY…ATLATPDGRL (737 aa)). 4-hydroxyphenylacetate is bound by residues Ser348 and Cys507. Cys507 functions as the Cysteine radical intermediate in the catalytic mechanism. Glu509 (proton donor) is an active-site residue. Positions 540 and 641 each coordinate 4-hydroxyphenylacetate. In terms of domain architecture, Glycine radical spans 782-902 (GSVSAYAGTD…VIARTEYEGV (121 aa)). The residue at position 877 (Gly877) is a Glycine radical.

It belongs to the glycyl radical enzyme (GRE) family. HPAD subfamily. Heterooctamer consisting of 4 large (HpdB) subunits and 4 small (HpdC) subunits, arranged as a tetramer of heterodimers. Also forms a catalytically inactive homodimer. Requires the activating protein CsdA to generate the key active site glycyl radical that is involved in catalysis. In terms of processing, phosphorylated on serine. Phosphorylation may trigger the formation of the active heterooctamers and thereby regulates enzyme activity.

The enzyme catalyses 4-hydroxyphenylacetate + H(+) = 4-methylphenol + CO2. The catalysed reaction is 3,4-dihydroxyphenylacetate + H(+) = 4-methylcatechol + CO2. Functionally, glycyl radical subunit of the HPA decarboxylase that decarboxylates phenylacetates with a hydroxyl group in the p-position. Active toward 4-hydroxyphenylacetate and 3,4-dihydroxyphenylacetate, forming 4-methylphenol and 4-methylcatechol, respectively. Is likely involved in the catabolism of aromatic amino acids such as tyrosine fermentation. 4-methylphenol (p-cresol) formation provides metabolic toxicity, which allows an active suppression of other microbes and may provide growth advantages for the producers in highly competitive environments. The large subunit is the catalytic subunit that binds the substrate. The protein is 4-hydroxyphenylacetate decarboxylase glycyl radical subunit of Clostridioides difficile (strain CD196) (Peptoclostridium difficile).